A 177-amino-acid chain; its full sequence is Ribosome rescue factor SmrB (177 aa).

One can recognise a Smr domain in the interval 98-173; that stretch reads LDMHGMKQDE…GAGAILVLLS (76 aa).

It belongs to the SmrB family. In terms of assembly, associates with collided ribosomes, but not with correctly translating polysomes.

In terms of biological role, acts as a ribosome collision sensor. Detects stalled/collided disomes (pairs of ribosomes where the leading ribosome is stalled and a second ribosome has collided with it) and endonucleolytically cleaves mRNA at the 5' boundary of the stalled ribosome. Stalled/collided disomes form a new interface (primarily via the 30S subunits) that binds SmrB. Cleaved mRNA becomes available for tmRNA ligation, leading to ribosomal subunit dissociation and rescue of stalled ribosomes. This chain is Ribosome rescue factor SmrB, found in Aliivibrio fischeri (strain ATCC 700601 / ES114) (Vibrio fischeri).